A 721-amino-acid chain; its full sequence is MNQTPWKFKTFRDLLLKSVAERDLFTGKSLHALYVKSIVASSTYLSNHFVNLYSKCGRLSYARAAFYSTEEPNVFSYNVIVKAYAKDSKIHIARQLFDEIPQPDTVSYNTLISGYADARETFAAMVLFKRMRKLGFEVDGFTLSGLIAACCDRVDLIKQLHCFSVSGGFDSYSSVNNAFVTYYSKGGLLREAVSVFYGMDELRDEVSWNSMIVAYGQHKEGAKALALYKEMIFKGFKIDMFTLASVLNALTSLDHLIGGRQFHGKLIKAGFHQNSHVGSGLIDFYSKCGGCDGMYDSEKVFQEILSPDLVVWNTMISGYSMNEELSEEAVKSFRQMQRIGHRPDDCSFVCVTSACSNLSSPSQCKQIHGLAIKSHIPSNRISVNNALISLYYKSGNLQDARWVFDRMPELNAVSFNCMIKGYAQHGHGTEALLLYQRMLDSGIAPNKITFVAVLSACAHCGKVDEGQEYFNTMKETFKIEPEAEHYSCMIDLLGRAGKLEEAERFIDAMPYKPGSVAWAALLGACRKHKNMALAERAANELMVMQPLAATPYVMLANMYADARKWEEMASVRKSMRGKRIRKKPGCSWIEVKKKKHVFVAEDWSHPMIREVNEYLEEMMKKMKKVGYVMDKKWAMVKEDEAGEGDEEMRLGHHSEKLAVAFGLMSTRDGEELVVVKNLRICGDCHNAIKFMSAVAGREIIVRDNLRFHCFKDGKCSCGDYW.

14 PPR repeats span residues 42–72 (STYL…TEEP), 73–103 (NVFS…IPQP), 104–138 (DTVS…GFEV), 139–169 (DGFT…SGGF), 172–202 (YSSV…MDEL), 204–238 (DEVS…GFKI), 239–273 (DMFT…GFHQ), 274–307 (NSHV…ILSP), 308–343 (DLVV…GHRP), 344–378 (DDCS…HIPS), 380–410 (RISV…MPEL), 411–445 (NAVS…GIAP), 446–476 (NKIT…MKET), and 482–512 (EAEH…MPYK). Residues 517-592 (AWAALLGACR…KPGCSWIEVK (76 aa)) are type E motif. A type E(+) motif region spans residues 593-623 (KKKHVFVAEDWSHPMIREVNEYLEEMMKKMK). The type DYW motif stretch occupies residues 624–721 (KVGYVMDKKW…DGKCSCGDYW (98 aa)).

The protein belongs to the PPR family. PCMP-H subfamily.

This is Pentatricopeptide repeat-containing protein At3g49710 (PCMP-H79) from Arabidopsis thaliana (Mouse-ear cress).